A 70-amino-acid polypeptide reads, in one-letter code: MMGKLGVVLFICLVLFPLETLQLEGGQQADRHVDQLEGNPNRETRTIEVRCTTMNCLKGHCGCSPDCGSC.

Residues 1–20 form the signal peptide; it reads MMGKLGVVLFICLVLFPLET. The propeptide occupies 21-50; sequence LQLEGGQQADRHVDQLEGNPNRETRTIEVR. 3 cysteine pairs are disulfide-bonded: Cys51-Cys63, Cys56-Cys67, and Cys61-Cys70.

This sequence belongs to the conotoxin M superfamily. Expressed by the venom duct.

It is found in the secreted. This Californiconus californicus (California cone) protein is Conotoxin Cl9.1.